A 191-amino-acid chain; its full sequence is Protein Ves (191 aa).

It belongs to the Ves family.

The protein is Protein Ves of Escherichia coli O139:H28 (strain E24377A / ETEC).